A 214-amino-acid chain; its full sequence is UPF0301 protein NFA_55110 (214 aa).

Residues 1 to 24 are disordered; it reads MARADDPDERKTQGGHGDRRRREF.

The protein belongs to the UPF0301 (AlgH) family.

This chain is UPF0301 protein NFA_55110, found in Nocardia farcinica (strain IFM 10152).